Reading from the N-terminus, the 270-residue chain is 3-phenylpropionate-dihydrodiol/cinnamic acid-dihydrodiol dehydrogenase (270 aa).

Position 10–34 (10–34 (FITGGGSGLGLALVERFIEEGAQVA)) interacts with NAD(+). Serine 143 is a substrate binding site. Tyrosine 156 functions as the Proton acceptor in the catalytic mechanism.

Belongs to the short-chain dehydrogenases/reductases (SDR) family.

The catalysed reaction is 3-(cis-5,6-dihydroxycyclohexa-1,3-dien-1-yl)propanoate + NAD(+) = 3-(2,3-dihydroxyphenyl)propanoate + NADH + H(+). The enzyme catalyses (2E)-3-(cis-5,6-dihydroxycyclohexa-1,3-dien-1-yl)prop-2-enoate + NAD(+) = (2E)-3-(2,3-dihydroxyphenyl)prop-2-enoate + NADH + H(+). The protein operates within aromatic compound metabolism; 3-phenylpropanoate degradation. Converts 3-phenylpropionate-dihydrodiol (PP-dihydrodiol) and cinnamic acid-dihydrodiol (CI-dihydrodiol) into 3-(2,3-dihydroxylphenyl)propanoic acid (DHPP) and 2,3-dihydroxicinnamic acid (DHCI), respectively. This chain is 3-phenylpropionate-dihydrodiol/cinnamic acid-dihydrodiol dehydrogenase, found in Escherichia coli O17:K52:H18 (strain UMN026 / ExPEC).